The following is a 700-amino-acid chain: Protein kinase C, eye isozyme (700 aa).

2 Phorbol-ester/DAG-type zinc fingers span residues 71–121 (GHRF…VFKC) and 136–186 (KHGW…PPMC). The 122-residue stretch at 189-310 (DISEVRGKLL…LQKEPVDGWY (122 aa)) folds into the C2 domain. Residues aspartate 222, aspartate 228, aspartate 281, aspartate 283, serine 286, and aspartate 289 each coordinate Ca(2+). The region spanning 371-629 (FNFVKVIGKG…RQEITTHPFF (259 aa)) is the Protein kinase domain. ATP is bound by residues 377–385 (IGKGSFGKV) and lysine 400. Catalysis depends on aspartate 495, which acts as the Proton acceptor. In terms of domain architecture, AGC-kinase C-terminal spans 630-700 (RNVDWDKAEA…FMNPEFITII (71 aa)).

Belongs to the protein kinase superfamily. AGC Ser/Thr protein kinase family. PKC subfamily. Ca(2+) serves as cofactor. In terms of tissue distribution, exclusively expressed in photoreceptor cells.

It carries out the reaction L-seryl-[protein] + ATP = O-phospho-L-seryl-[protein] + ADP + H(+). The enzyme catalyses L-threonyl-[protein] + ATP = O-phospho-L-threonyl-[protein] + ADP + H(+). Functionally, this is a calcium-activated, phospholipid-dependent, serine- and threonine-specific enzyme. This isozyme is a negative regulator of the visual transduction cascade and has been shown to be required for photoreceptor cell inactivation and light adaptation. Negative regulation is dependent on interaction with scaffolding protein inaD. Acts in a hh-signaling pathway which regulates the Duox-dependent gut immune response to bacterial uracil; required for the activation of Cad99C and consequently Cad99C-dependent endosome formation, which is essential for the Duox-dependent production of reactive oxygen species (ROS) in response to intestinal bacterial infection. In Drosophila melanogaster (Fruit fly), this protein is Protein kinase C, eye isozyme (inaC).